The sequence spans 329 residues: Ribosome biogenesis regulatory protein homolog (329 aa).

Disordered stretches follow at residues 227 to 248 (KANI…VSAE) and 262 to 329 (KKAK…NKRK). A compositionally biased stretch (basic and acidic residues) spans 278 to 295 (LREKKEKQEKKGAKEATR). The segment covering 320–329 (AKKKGANKRK) has biased composition (basic residues).

This sequence belongs to the RRS1 family.

Its subcellular location is the nucleus. The protein resides in the nucleolus. Its function is as follows. Involved in ribosomal large subunit assembly. The polypeptide is Ribosome biogenesis regulatory protein homolog (Caenorhabditis briggsae).